A 292-amino-acid polypeptide reads, in one-letter code: Ubiquinone biosynthesis protein UbiV (292 aa).

Positions 39, 180, 193, and 197 each coordinate [4Fe-4S] cluster.

Belongs to the peptidase U32 family. UbiV subfamily. As to quaternary structure, forms a heterodimer with UbiU. The cofactor is [4Fe-4S] cluster.

It functions in the pathway cofactor biosynthesis; ubiquinone biosynthesis. Its function is as follows. Required for O(2)-independent ubiquinone (coenzyme Q) biosynthesis. Together with UbiU, is essential for the C6-hydroxylation reaction in the oxygen-independent ubiquinone biosynthesis pathway. The protein is Ubiquinone biosynthesis protein UbiV of Escherichia coli (strain K12).